The following is a 435-amino-acid chain: Divergent protein kinase domain 2B (435 aa).

An N-terminal signal peptide occupies residues 1-33; that stretch reads MESQWRGAAATAFHQHWLARLLLWVSTLSCSFS. N-linked (GlcNAc...) asparagine glycans are attached at residues asparagine 102 and asparagine 395.

It belongs to the DIPK family.

It is found in the secreted. The sequence is that of Divergent protein kinase domain 2B (Dipk2b) from Mus musculus (Mouse).